Here is a 310-residue protein sequence, read N- to C-terminus: 5'-adenylylsulfate reductase-like 4 (310 aa).

The signal sequence occupies residues 1-22 (MEKEILLLLLVIMFLTVADVDA). Residues 49–168 (GVESDERPRF…LVAFYSDVTG (120 aa)) enclose the Thioredoxin domain. N-linked (GlcNAc...) asparagine glycosylation is found at Asn143 and Asn190. Residues 217-237 (LAIVFVLLRLLHLIYPTLVVF) traverse the membrane as a helical segment.

The protein resides in the membrane. In Arabidopsis thaliana (Mouse-ear cress), this protein is 5'-adenylylsulfate reductase-like 4 (APRL4).